The chain runs to 460 residues: MDGALFLLRGRTEAILTMKIHITSLGCAKNRVDTEVMMGLLREAGYELTQREEDAHVLLVNTCGFILPAKEESIQTILELARYKETGRCRALLVAGCLPQGYAGELAAELPEVDAFFGPGDVPRVTSIVAEVLRGKRSLEVGKPDFLYDHTMPRVLSTPFHYAYVKIADGCDNRCGYCAIPNLRGRFRSRSEESIVEETRSLVDRGIQEALLIAQDTTCYGVDRYGEFRLAQLIGKLASIDGLRWIRLMYCYPSHFTPELIEAMAAEPKVCRYVDLPLQHADDELLRSMNRHAGVDEIRRLIRTLRERLPGLAIRTSFIVGLPGETEEKFQRLLDFLAEMRFDRVGIFTYSREENTPAGKLADQVPEEVKEERYHRAMVLQQEISLSIQQEWIGKTLEVLVEEEVAPGLYRGRSEREAPEVDGHIEFKGRHRMIGEWANVRITAASHYDLMGEAIDEPGE.

In terms of domain architecture, MTTase N-terminal spans 18–134 (MKIHITSLGC…VTSIVAEVLR (117 aa)). C27, C63, C97, C171, C175, and C178 together coordinate [4Fe-4S] cluster. Residues 157 to 387 (STPFHYAYVK…MVLQQEISLS (231 aa)) enclose the Radical SAM core domain. In terms of domain architecture, TRAM spans 390–456 (QEWIGKTLEV…HYDLMGEAID (67 aa)).

This sequence belongs to the methylthiotransferase family. RimO subfamily. Requires [4Fe-4S] cluster as cofactor.

It is found in the cytoplasm. It catalyses the reaction L-aspartate(89)-[ribosomal protein uS12]-hydrogen + (sulfur carrier)-SH + AH2 + 2 S-adenosyl-L-methionine = 3-methylsulfanyl-L-aspartate(89)-[ribosomal protein uS12]-hydrogen + (sulfur carrier)-H + 5'-deoxyadenosine + L-methionine + A + S-adenosyl-L-homocysteine + 2 H(+). Functionally, catalyzes the methylthiolation of an aspartic acid residue of ribosomal protein uS12. This is Ribosomal protein uS12 methylthiotransferase RimO from Heliobacterium modesticaldum (strain ATCC 51547 / Ice1).